Reading from the N-terminus, the 340-residue chain is HPr kinase/phosphorylase (340 aa).

Catalysis depends on residues histidine 153 and lysine 174. 168–175 (GRSGIGKS) contributes to the ATP binding site. Serine 175 contacts Mg(2+). Aspartate 192 serves as the catalytic Proton acceptor; for phosphorylation activity. Proton donor; for dephosphorylation activity. The segment at 216–225 (MEIRGLGIID) is important for the catalytic mechanism of both phosphorylation and dephosphorylation. Glutamate 217 serves as a coordination point for Mg(2+). The active site involves arginine 258. The tract at residues 279-284 (PIYPGK) is important for the catalytic mechanism of dephosphorylation.

The protein belongs to the HPrK/P family. In terms of assembly, homohexamer. Mg(2+) serves as cofactor.

The catalysed reaction is [HPr protein]-L-serine + ATP = [HPr protein]-O-phospho-L-serine + ADP + H(+). It carries out the reaction [HPr protein]-O-phospho-L-serine + phosphate + H(+) = [HPr protein]-L-serine + diphosphate. Catalyzes the ATP- as well as the pyrophosphate-dependent phosphorylation of a specific serine residue in HPr, a phosphocarrier protein of the phosphoenolpyruvate-dependent sugar phosphotransferase system (PTS). HprK/P also catalyzes the pyrophosphate-producing, inorganic phosphate-dependent dephosphorylation (phosphorolysis) of seryl-phosphorylated HPr (P-Ser-HPr). The chain is HPr kinase/phosphorylase from Chloroherpeton thalassium (strain ATCC 35110 / GB-78).